A 266-amino-acid polypeptide reads, in one-letter code: Nickel import ATP-binding protein NikE (266 aa).

The region spanning 4–252 (ISADNIVKIY…RHPASRLLRE (249 aa)) is the ABC transporter domain. 45 to 52 (GRSGCGKS) contributes to the ATP binding site.

This sequence belongs to the ABC transporter superfamily. Nickel importer (TC 3.A.1.5.3) family. As to quaternary structure, the complex is composed of two ATP-binding proteins (NikD and NikE), two transmembrane proteins (NikB and NikC) and a solute-binding protein (NikA).

Its subcellular location is the cell inner membrane. It catalyses the reaction Ni(2+)(out) + ATP + H2O = Ni(2+)(in) + ADP + phosphate + H(+). Its function is as follows. Part of the ABC transporter complex NikABCDE involved in nickel import. Responsible for energy coupling to the transport system. The protein is Nickel import ATP-binding protein NikE of Brucella suis biovar 1 (strain 1330).